The sequence spans 510 residues: Histidine ammonia-lyase (510 aa).

The segment at residues 143–145 (ASG) is a cross-link (5-imidazolinone (Ala-Gly)). Residue Ser-144 is modified to 2,3-didehydroalanine (Ser).

The protein belongs to the PAL/histidase family. Post-translationally, contains an active site 4-methylidene-imidazol-5-one (MIO), which is formed autocatalytically by cyclization and dehydration of residues Ala-Ser-Gly.

The protein localises to the cytoplasm. It catalyses the reaction L-histidine = trans-urocanate + NH4(+). The protein operates within amino-acid degradation; L-histidine degradation into L-glutamate; N-formimidoyl-L-glutamate from L-histidine: step 1/3. The protein is Histidine ammonia-lyase of Shewanella sediminis (strain HAW-EB3).